Reading from the N-terminus, the 724-residue chain is Coiled-coil domain-containing protein 175 (724 aa).

Coiled-coil stretches lie at residues 131 to 164 (VEMSELHTKITRINDEIEFLKKKILHLQTDNTAL), 203 to 256 (INLE…RKET), 282 to 373 (VVLS…RQYK), 426 to 534 (ELHR…ERKL), and 565 to 627 (QLQV…QLRE).

The polypeptide is Coiled-coil domain-containing protein 175 (CCDC175) (Bos taurus (Bovine)).